The primary structure comprises 211 residues: Probable metallo-hydrolase YqgX (211 aa).

7 residues coordinate Zn(2+): His-54, His-56, Asp-58, His-59, His-130, Asp-149, and His-190.

Belongs to the metallo-beta-lactamase superfamily. Glyoxalase II family. Zn(2+) serves as cofactor.

In Bacillus subtilis (strain 168), this protein is Probable metallo-hydrolase YqgX (yqgX).